The following is a 272-amino-acid chain: NADPH-dependent aldehyde reductase 2, chloroplastic (272 aa).

A chloroplast-targeting transit peptide spans 1 to 53 (MAAASSVSSPPLCLAGRVAIVTGSSRGIGRAIAIHLAELGARVVVNYSTSPVE). 26–50 (RGIGRAIAIHLAELGARVVVNYSTS) lines the NADP(+) pocket. Ser-165 contacts substrate. Residue Tyr-179 is the Proton acceptor of the active site.

It belongs to the short-chain dehydrogenases/reductases (SDR) family.

Its subcellular location is the plastid. It is found in the chloroplast. Functionally, aldehyde reductase that catalyzes the reduction of the aldehyde carbonyl groups on saturated and alpha,beta-unsaturated aldehydes with more than 5 carbons. No activity on alpha,beta-unsaturated ketones. Can use propionaldehyde, butyraldehyde, methylglyoxal, (e)-2-pentenal, (E)-2-hexenal, (Z)-3-hexenal and (E)-2-nonenal as substrates, but not propenal (acrolein), crotonaldehyde, 2-butanone, 3-buten-2-one or 1-penten-3-one. This Arabidopsis thaliana (Mouse-ear cress) protein is NADPH-dependent aldehyde reductase 2, chloroplastic.